Consider the following 179-residue polypeptide: Laminin-binding fimbrial subunit ElfA (179 aa).

The signal sequence occupies residues 1–21; sequence MKKSVLTAFITVVCATSSVMA.

This sequence belongs to the fimbrial protein family.

Its subcellular location is the fimbrium. Its function is as follows. Part of the elfADCG fimbrial operon, which could be required for adherence to host epithelial cells. ElfA is an accessory colonization factor that contributes to adherence of bacteria to human intestinal epithelial cells and to animal intestinal tissue in vitro. Binds specifically to laminin, but not to fibronectin or collagen type IV. This Escherichia coli O157:H7 protein is Laminin-binding fimbrial subunit ElfA (elfA).